A 553-amino-acid chain; its full sequence is Dihydroxy-acid dehydratase (553 aa).

Mg(2+) is bound at residue D78. Position 119 (C119) interacts with [2Fe-2S] cluster. Residues D120 and K121 each contribute to the Mg(2+) site. Position 121 is an N6-carboxylysine (K121). C193 lines the [2Fe-2S] cluster pocket. E441 lines the Mg(2+) pocket. Catalysis depends on S467, which acts as the Proton acceptor.

It belongs to the IlvD/Edd family. As to quaternary structure, homodimer. [2Fe-2S] cluster is required as a cofactor. Requires Mg(2+) as cofactor.

It carries out the reaction (2R)-2,3-dihydroxy-3-methylbutanoate = 3-methyl-2-oxobutanoate + H2O. It catalyses the reaction (2R,3R)-2,3-dihydroxy-3-methylpentanoate = (S)-3-methyl-2-oxopentanoate + H2O. Its pathway is amino-acid biosynthesis; L-isoleucine biosynthesis; L-isoleucine from 2-oxobutanoate: step 3/4. It participates in amino-acid biosynthesis; L-valine biosynthesis; L-valine from pyruvate: step 3/4. Functions in the biosynthesis of branched-chain amino acids. Catalyzes the dehydration of (2R,3R)-2,3-dihydroxy-3-methylpentanoate (2,3-dihydroxy-3-methylvalerate) into 2-oxo-3-methylpentanoate (2-oxo-3-methylvalerate) and of (2R)-2,3-dihydroxy-3-methylbutanoate (2,3-dihydroxyisovalerate) into 2-oxo-3-methylbutanoate (2-oxoisovalerate), the penultimate precursor to L-isoleucine and L-valine, respectively. The polypeptide is Dihydroxy-acid dehydratase (Geobacter metallireducens (strain ATCC 53774 / DSM 7210 / GS-15)).